The chain runs to 556 residues: 2-succinyl-5-enolpyruvyl-6-hydroxy-3-cyclohexene-1-carboxylate synthase (556 aa).

The protein belongs to the TPP enzyme family. MenD subfamily. Homodimer. The cofactor is Mg(2+). Mn(2+) serves as cofactor. Thiamine diphosphate is required as a cofactor.

It catalyses the reaction isochorismate + 2-oxoglutarate + H(+) = 5-enolpyruvoyl-6-hydroxy-2-succinyl-cyclohex-3-ene-1-carboxylate + CO2. Its pathway is quinol/quinone metabolism; 1,4-dihydroxy-2-naphthoate biosynthesis; 1,4-dihydroxy-2-naphthoate from chorismate: step 2/7. It functions in the pathway quinol/quinone metabolism; menaquinone biosynthesis. Functionally, catalyzes the thiamine diphosphate-dependent decarboxylation of 2-oxoglutarate and the subsequent addition of the resulting succinic semialdehyde-thiamine pyrophosphate anion to isochorismate to yield 2-succinyl-5-enolpyruvyl-6-hydroxy-3-cyclohexene-1-carboxylate (SEPHCHC). In Escherichia coli O157:H7, this protein is 2-succinyl-5-enolpyruvyl-6-hydroxy-3-cyclohexene-1-carboxylate synthase.